We begin with the raw amino-acid sequence, 488 residues long: IQ domain-containing protein IQM1 (488 aa).

Residues Arg20 to Phe46 form a disordered region. A compositionally biased stretch (polar residues) spans His32 to Phe46. Positions Leu106–Glu135 constitute an IQ domain. Disordered regions lie at residues Ser377–Glu403 and Ser448–Ser472. Over residues Arg388–Glu403 the composition is skewed to basic and acidic residues.

As to quaternary structure, interacts (via IQ domain) with CAM5. Highly expressed in leaf mesophyll cells. Expressed in roots, rosette and cauline leaves, stems, flowers and siliques.

The protein localises to the cytoplasm. It is found in the nucleus. Its function is as follows. Involved in the modulation of stomatal movement. Promotes stomatal opening. May play a role in the regulation of chitin signaling. May be involved in biotic and abiotic stress responses. In Arabidopsis thaliana (Mouse-ear cress), this protein is IQ domain-containing protein IQM1.